We begin with the raw amino-acid sequence, 349 residues long: Dihydroorotate dehydrogenase (quinone) (349 aa).

FMN-binding positions include 67–71 (AGLDK) and Thr91. Residue Lys71 coordinates substrate. Substrate is bound at residue 116–120 (NRLGF). FMN contacts are provided by Asn147 and Asn180. Asn180 lines the substrate pocket. Residue Ser183 is the Nucleophile of the active site. A substrate-binding site is contributed by Asn185. Positions 225 and 253 each coordinate FMN. 254–255 (NT) provides a ligand contact to substrate. Residues Gly276, Gly305, and 326–327 (YT) contribute to the FMN site.

Belongs to the dihydroorotate dehydrogenase family. Type 2 subfamily. In terms of assembly, monomer. FMN is required as a cofactor.

The protein localises to the cell membrane. It carries out the reaction (S)-dihydroorotate + a quinone = orotate + a quinol. The protein operates within pyrimidine metabolism; UMP biosynthesis via de novo pathway; orotate from (S)-dihydroorotate (quinone route): step 1/1. Functionally, catalyzes the conversion of dihydroorotate to orotate with quinone as electron acceptor. The chain is Dihydroorotate dehydrogenase (quinone) from Bordetella avium (strain 197N).